Consider the following 257-residue polypeptide: 5-keto-4-deoxy-D-glucarate aldolase (257 aa).

Residue H51 is the Proton acceptor of the active site. Position 152 (Q152) interacts with substrate. E154 provides a ligand contact to Mg(2+). Residues S179 and D180 each contribute to the substrate site. D180 contributes to the Mg(2+) binding site.

Belongs to the HpcH/HpaI aldolase family. KDGluc aldolase subfamily. As to quaternary structure, homohexamer; trimer of dimers. It depends on Mg(2+) as a cofactor.

The enzyme catalyses 5-dehydro-4-deoxy-D-glucarate = 2-hydroxy-3-oxopropanoate + pyruvate. It catalyses the reaction 2-dehydro-3-deoxy-D-glucarate = 2-hydroxy-3-oxopropanoate + pyruvate. It participates in carbohydrate acid metabolism; galactarate degradation; D-glycerate from galactarate: step 2/3. In terms of biological role, catalyzes the reversible retro-aldol cleavage of both 5-keto-4-deoxy-D-glucarate and 2-keto-3-deoxy-D-glucarate to pyruvate and tartronic semialdehyde. The protein is 5-keto-4-deoxy-D-glucarate aldolase of Citrobacter koseri (strain ATCC BAA-895 / CDC 4225-83 / SGSC4696).